Reading from the N-terminus, the 530-residue chain is Ubiquitin carboxyl-terminal hydrolase 17-like protein 11 (530 aa).

Residues 80–375 form the USP domain; the sequence is AGLQNMGNTC…QAYVLFYIQK (296 aa). Catalysis depends on C89, which acts as the Nucleophile. H334 serves as the catalytic Proton acceptor. 2 stretches are compositionally biased toward basic and acidic residues: residues 382–392 and 398–413; these read SESVSRGREPR and DTDRRATQGELKRDHP. 2 disordered regions span residues 382-413 and 509-530; these read SESVSRGREPRALGAEDTDRRATQGELKRDHP and RGRARRSKGKNKHSKRALLVCQ. The span at 510-524 shows a compositional bias: basic residues; that stretch reads GRARRSKGKNKHSKR.

It belongs to the peptidase C19 family. USP17 subfamily.

The protein resides in the nucleus. The protein localises to the endoplasmic reticulum. It carries out the reaction Thiol-dependent hydrolysis of ester, thioester, amide, peptide and isopeptide bonds formed by the C-terminal Gly of ubiquitin (a 76-residue protein attached to proteins as an intracellular targeting signal).. Its function is as follows. Deubiquitinating enzyme that removes conjugated ubiquitin from specific proteins to regulate different cellular processes that may include cell proliferation, progression through the cell cycle, apoptosis, cell migration, and the cellular response to viral infection. The polypeptide is Ubiquitin carboxyl-terminal hydrolase 17-like protein 11 (USP17L11) (Homo sapiens (Human)).